A 1049-amino-acid chain; its full sequence is Protein argonaute 12 (1049 aa).

A compositionally biased stretch (gly residues) spans Met1 to Gly53. Disordered stretches follow at residues Met1–Val101 and Gly144–Thr192. Over residues Ala54–Arg65 the composition is skewed to basic and acidic residues. A compositionally biased stretch (gly residues) spans Gly66–Ala76. A compositionally biased stretch (low complexity) spans Gly144 to Gly160. A PAZ domain is found at Pro404–Glu515. Positions Leu694–Glu1012 constitute a Piwi domain.

Belongs to the argonaute family. Ago subfamily.

Probably involved in the RNA silencing pathway. May bind to short RNAs such as microRNAs (miRNAs) or short interfering RNAs (siRNAs), and represses the translation of mRNAs which are complementary to them. In Oryza sativa subsp. japonica (Rice), this protein is Protein argonaute 12 (AGO12).